Consider the following 509-residue polypeptide: Bifunctional purine biosynthesis protein PurH (509 aa).

One can recognise an MGS-like domain in the interval 1–144 (MKRALISVSD…KNYAAVTVVV (144 aa)).

It belongs to the PurH family.

It catalyses the reaction (6R)-10-formyltetrahydrofolate + 5-amino-1-(5-phospho-beta-D-ribosyl)imidazole-4-carboxamide = 5-formamido-1-(5-phospho-D-ribosyl)imidazole-4-carboxamide + (6S)-5,6,7,8-tetrahydrofolate. The enzyme catalyses IMP + H2O = 5-formamido-1-(5-phospho-D-ribosyl)imidazole-4-carboxamide. It participates in purine metabolism; IMP biosynthesis via de novo pathway; 5-formamido-1-(5-phospho-D-ribosyl)imidazole-4-carboxamide from 5-amino-1-(5-phospho-D-ribosyl)imidazole-4-carboxamide (10-formyl THF route): step 1/1. It functions in the pathway purine metabolism; IMP biosynthesis via de novo pathway; IMP from 5-formamido-1-(5-phospho-D-ribosyl)imidazole-4-carboxamide: step 1/1. In Listeria innocua serovar 6a (strain ATCC BAA-680 / CLIP 11262), this protein is Bifunctional purine biosynthesis protein PurH.